The chain runs to 434 residues: Enolase (434 aa).

Gln-163 serves as a coordination point for (2R)-2-phosphoglycerate. Glu-205 functions as the Proton donor in the catalytic mechanism. Positions 242, 291, and 318 each coordinate Mg(2+). 4 residues coordinate (2R)-2-phosphoglycerate: Lys-343, Arg-372, Ser-373, and Lys-394. The active-site Proton acceptor is the Lys-343.

The protein belongs to the enolase family. Mg(2+) is required as a cofactor.

Its subcellular location is the cytoplasm. It localises to the secreted. The protein localises to the cell surface. The catalysed reaction is (2R)-2-phosphoglycerate = phosphoenolpyruvate + H2O. Its pathway is carbohydrate degradation; glycolysis; pyruvate from D-glyceraldehyde 3-phosphate: step 4/5. Functionally, catalyzes the reversible conversion of 2-phosphoglycerate (2-PG) into phosphoenolpyruvate (PEP). It is essential for the degradation of carbohydrates via glycolysis. This is Enolase from Streptococcus thermophilus (strain ATCC BAA-491 / LMD-9).